The sequence spans 150 residues: Deoxyuridine 5'-triphosphate nucleotidohydrolase (150 aa).

Substrate is bound by residues 69 to 71 (RSG), asparagine 82, 86 to 88 (LID), and lysine 96.

The protein belongs to the dUTPase family. The cofactor is Mg(2+).

The enzyme catalyses dUTP + H2O = dUMP + diphosphate + H(+). It participates in pyrimidine metabolism; dUMP biosynthesis; dUMP from dCTP (dUTP route): step 2/2. This enzyme is involved in nucleotide metabolism: it produces dUMP, the immediate precursor of thymidine nucleotides and it decreases the intracellular concentration of dUTP so that uracil cannot be incorporated into DNA. The protein is Deoxyuridine 5'-triphosphate nucleotidohydrolase of Neisseria meningitidis serogroup B (strain ATCC BAA-335 / MC58).